The following is a 790-amino-acid chain: Potassium transporter 22 (790 aa).

Over 1–64 (MAQQQGQGAG…HGEGWARTLR (64 aa)) the chain is Cytoplasmic. The helical transmembrane segment at 65–85 (LAFQCFGVLYGDIGTSPLYVY) threads the bilayer. Over 86-98 (STTFDGGIRHTDD) the chain is Extracellular. A helical transmembrane segment spans residues 99 to 119 (LLGVLSLIIYSFLLFTIIKYV). Residues 120 to 198 (YIALRANDDG…DLLENSRPVR (79 aa)) are Cytoplasmic-facing. A helical membrane pass occupies residues 199-219 (ISLFLLTILATAMVISDACLT). The Extracellular portion of the chain corresponds to 220-236 (PAISVLSAVGGLKDKAP). The chain crosses the membrane as a helical span at residues 237-257 (HLNTEQVVWVTVGILVMLFAV). The Cytoplasmic segment spans residues 258–264 (QRFGTDK). A helical membrane pass occupies residues 265–285 (VGYLFAPVVLLWLLLIGGVGV). Residues 286-318 (YNLAAHDVGVLRAFNPKYILDYFRRNGRHGWVS) lie on the Extracellular side of the membrane. The chain crosses the membrane as a helical span at residues 319 to 339 (LGGVLLCFTGTEALFADLGCF). Residues 340–345 (SIRSIQ) are Cytoplasmic-facing. Residues 346-366 (LSFAFGLVPAVLLAYAGQAAY) form a helical membrane-spanning segment. The Extracellular portion of the chain corresponds to 367–385 (LRVYPDHVGDAFYASTPQV). A helical transmembrane segment spans residues 386–406 (LFWPTLVLALAASVVGSQAMI). Residues 407–437 (SCAFATISHSQAMGCFPRVKVVHTSRQYQGQ) lie on the Cytoplasmic side of the membrane. Residues 438–458 (VYIPEINLLLGAAACVVTVAA) traverse the membrane as a helical segment. Residues 459-469 (RDTVVIGEAHG) are Extracellular-facing. A helical transmembrane segment spans residues 470 to 490 (ICVVLVMLITTLLLTVVMVLV). The Cytoplasmic portion of the chain corresponds to 491 to 492 (WR). The chain crosses the membrane as a helical span at residues 493–513 (VNIGWVLVFACVFASTESVYL). At 514 to 519 (TSVLYK) the chain is on the extracellular side. The chain crosses the membrane as a helical span at residues 520-540 (FAHGGYIPVAMSAVLMGVMGV). Over 541-790 (WHYVHVRRYK…LLKVGMSYEI (250 aa)) the chain is Cytoplasmic.

This sequence belongs to the HAK/KUP transporter (TC 2.A.72.3) family.

It localises to the membrane. Functionally, high-affinity potassium transporter. The sequence is that of Potassium transporter 22 (HAK22) from Oryza sativa subsp. japonica (Rice).